A 154-amino-acid polypeptide reads, in one-letter code: Transcription antitermination protein NusB (154 aa).

This sequence belongs to the NusB family.

In terms of biological role, involved in transcription antitermination. Required for transcription of ribosomal RNA (rRNA) genes. Binds specifically to the boxA antiterminator sequence of the ribosomal RNA (rrn) operons. The sequence is that of Transcription antitermination protein NusB from Oleidesulfovibrio alaskensis (strain ATCC BAA-1058 / DSM 17464 / G20) (Desulfovibrio alaskensis).